We begin with the raw amino-acid sequence, 215 residues long: Nucleoside triphosphate pyrophosphatase (215 aa).

D80 serves as the catalytic Proton acceptor.

It belongs to the Maf family. A divalent metal cation serves as cofactor.

The protein resides in the cytoplasm. It carries out the reaction a ribonucleoside 5'-triphosphate + H2O = a ribonucleoside 5'-phosphate + diphosphate + H(+). The enzyme catalyses a 2'-deoxyribonucleoside 5'-triphosphate + H2O = a 2'-deoxyribonucleoside 5'-phosphate + diphosphate + H(+). Functionally, nucleoside triphosphate pyrophosphatase. May have a dual role in cell division arrest and in preventing the incorporation of modified nucleotides into cellular nucleic acids. The protein is Nucleoside triphosphate pyrophosphatase of Leifsonia xyli subsp. xyli (strain CTCB07).